Here is a 515-residue protein sequence, read N- to C-terminus: 1-pyrroline-5-carboxylate dehydrogenase (515 aa).

Catalysis depends on residues Glu-286 and Cys-320.

Belongs to the aldehyde dehydrogenase family. RocA subfamily.

It carries out the reaction L-glutamate 5-semialdehyde + NAD(+) + H2O = L-glutamate + NADH + 2 H(+). Its pathway is amino-acid degradation; L-proline degradation into L-glutamate; L-glutamate from L-proline: step 2/2. The chain is 1-pyrroline-5-carboxylate dehydrogenase from Bacillus cereus (strain B4264).